We begin with the raw amino-acid sequence, 169 residues long: Protein-export protein SecB (169 aa).

This sequence belongs to the SecB family. As to quaternary structure, homotetramer, a dimer of dimers. One homotetramer interacts with 1 SecA dimer.

Its subcellular location is the cytoplasm. One of the proteins required for the normal export of preproteins out of the cell cytoplasm. It is a molecular chaperone that binds to a subset of precursor proteins, maintaining them in a translocation-competent state. It also specifically binds to its receptor SecA. In Pseudoalteromonas atlantica (strain T6c / ATCC BAA-1087), this protein is Protein-export protein SecB.